We begin with the raw amino-acid sequence, 508 residues long: Aspartyl/glutamyl-tRNA(Asn/Gln) amidotransferase subunit B (508 aa).

Belongs to the GatB/GatE family. GatB subfamily. In terms of assembly, heterotrimer of A, B and C subunits.

The enzyme catalyses L-glutamyl-tRNA(Gln) + L-glutamine + ATP + H2O = L-glutaminyl-tRNA(Gln) + L-glutamate + ADP + phosphate + H(+). It carries out the reaction L-aspartyl-tRNA(Asn) + L-glutamine + ATP + H2O = L-asparaginyl-tRNA(Asn) + L-glutamate + ADP + phosphate + 2 H(+). In terms of biological role, allows the formation of correctly charged Asn-tRNA(Asn) or Gln-tRNA(Gln) through the transamidation of misacylated Asp-tRNA(Asn) or Glu-tRNA(Gln) in organisms which lack either or both of asparaginyl-tRNA or glutaminyl-tRNA synthetases. The reaction takes place in the presence of glutamine and ATP through an activated phospho-Asp-tRNA(Asn) or phospho-Glu-tRNA(Gln). The chain is Aspartyl/glutamyl-tRNA(Asn/Gln) amidotransferase subunit B from Salinibacter ruber (strain DSM 13855 / M31).